Consider the following 585-residue polypeptide: Switch-associated protein 70 (585 aa).

The PH domain occupies 210–306 (DVLKQGYMMK…WIQAIYSTIH (97 aa)). The stretch at 316 to 529 (HKEARQRRKE…VKKKLEMATH (214 aa)) forms a coiled coil. The tract at residues 347-373 (ANENKQQELESVRKKLEEAASRAADEE) is disordered. The span at 351–373 (KQQELESVRKKLEEAASRAADEE) shows a compositional bias: basic and acidic residues.

The SWAP complex consists of NPM1, NCL, PARP1 and SWAP70. Post-translationally, tyrosine-phosphorylated. In terms of tissue distribution, spleen. Expressed only in B-cells that have been induced to switch to various Ig isotypes.

It localises to the cytoplasm. Its subcellular location is the cell membrane. It is found in the nucleus. The protein resides in the cell projection. The protein localises to the lamellipodium. It localises to the cytoskeleton. Functionally, phosphatidylinositol 3,4,5-trisphosphate-dependent guanine nucleotide exchange factor (GEF) which, independently of RAS, transduces signals from tyrosine kinase receptors to RAC. It also mediates signaling of membrane ruffling. Regulates the actin cytoskeleton as an effector or adapter protein in response to agonist stimulated phosphatidylinositol (3,4)-bisphosphate production and cell protrusion. The protein is Switch-associated protein 70 (Swap70) of Mus musculus (Mouse).